Consider the following 257-residue polypeptide: Pyridoxine 5'-phosphate synthase (257 aa).

3-amino-2-oxopropyl phosphate is bound at residue asparagine 6. Residue 8–9 (DH) participates in 1-deoxy-D-xylulose 5-phosphate binding. A 3-amino-2-oxopropyl phosphate-binding site is contributed by arginine 17. The active-site Proton acceptor is the histidine 41. 1-deoxy-D-xylulose 5-phosphate contacts are provided by arginine 43 and histidine 48. Glutamate 68 acts as the Proton acceptor in catalysis. Residue threonine 98 participates in 1-deoxy-D-xylulose 5-phosphate binding. The active-site Proton donor is the histidine 210. 3-amino-2-oxopropyl phosphate contacts are provided by residues glycine 211 and 232-233 (GQ).

It belongs to the PNP synthase family. As to quaternary structure, homooctamer; tetramer of dimers.

Its subcellular location is the cytoplasm. It carries out the reaction 3-amino-2-oxopropyl phosphate + 1-deoxy-D-xylulose 5-phosphate = pyridoxine 5'-phosphate + phosphate + 2 H2O + H(+). It functions in the pathway cofactor biosynthesis; pyridoxine 5'-phosphate biosynthesis; pyridoxine 5'-phosphate from D-erythrose 4-phosphate: step 5/5. Catalyzes the complicated ring closure reaction between the two acyclic compounds 1-deoxy-D-xylulose-5-phosphate (DXP) and 3-amino-2-oxopropyl phosphate (1-amino-acetone-3-phosphate or AAP) to form pyridoxine 5'-phosphate (PNP) and inorganic phosphate. This is Pyridoxine 5'-phosphate synthase from Campylobacter jejuni subsp. jejuni serotype O:6 (strain 81116 / NCTC 11828).